Consider the following 482-residue polypeptide: G patch domain-containing protein 2-like (482 aa).

Residues serine 31, serine 86, and serine 88 each carry the phosphoserine modification. Residue threonine 91 is modified to Phosphothreonine. Lysine 196 is covalently cross-linked (Glycyl lysine isopeptide (Lys-Gly) (interchain with G-Cter in SUMO2)). Basic and acidic residues predominate over residues 198 to 214; it reads GRKERMECETDEQKQGS. Disordered stretches follow at residues 198–247 and 413–482; these read GRKE…DDEQ and KRKR…PGYS. Low complexity predominate over residues 220–230; that stretch reads ECETSSVCSSS. Residues 439-450 are compositionally biased toward polar residues; the sequence is TPASQAPKSPSS. Phosphoserine is present on residues serine 447 and serine 449. Over residues 456-469 the composition is skewed to low complexity; the sequence is TSAAEKATDATTAT.

The sequence is that of G patch domain-containing protein 2-like (GPATCH2L) from Homo sapiens (Human).